We begin with the raw amino-acid sequence, 450 residues long: ATP-dependent protease ATPase subunit HslU (450 aa).

ATP is bound by residues Val-27, 69 to 74 (GVGKTE), Asp-263, Glu-328, and Arg-400.

It belongs to the ClpX chaperone family. HslU subfamily. As to quaternary structure, a double ring-shaped homohexamer of HslV is capped on each side by a ring-shaped HslU homohexamer. The assembly of the HslU/HslV complex is dependent on binding of ATP.

Its subcellular location is the cytoplasm. ATPase subunit of a proteasome-like degradation complex; this subunit has chaperone activity. The binding of ATP and its subsequent hydrolysis by HslU are essential for unfolding of protein substrates subsequently hydrolyzed by HslV. HslU recognizes the N-terminal part of its protein substrates and unfolds these before they are guided to HslV for hydrolysis. The protein is ATP-dependent protease ATPase subunit HslU of Aquifex aeolicus (strain VF5).